Consider the following 278-residue polypeptide: Thiazole synthase (278 aa).

Lysine 107 serves as the catalytic Schiff-base intermediate with DXP. 1-deoxy-D-xylulose 5-phosphate is bound by residues glycine 168, 194–195, and 216–217; these read AG and AS.

It belongs to the ThiG family. In terms of assembly, homotetramer. Forms heterodimers with either ThiH or ThiS.

The protein localises to the cytoplasm. The enzyme catalyses [ThiS sulfur-carrier protein]-C-terminal-Gly-aminoethanethioate + 2-iminoacetate + 1-deoxy-D-xylulose 5-phosphate = [ThiS sulfur-carrier protein]-C-terminal Gly-Gly + 2-[(2R,5Z)-2-carboxy-4-methylthiazol-5(2H)-ylidene]ethyl phosphate + 2 H2O + H(+). Its pathway is cofactor biosynthesis; thiamine diphosphate biosynthesis. Catalyzes the rearrangement of 1-deoxy-D-xylulose 5-phosphate (DXP) to produce the thiazole phosphate moiety of thiamine. Sulfur is provided by the thiocarboxylate moiety of the carrier protein ThiS. In vitro, sulfur can be provided by H(2)S. The protein is Thiazole synthase of Corynebacterium jeikeium (strain K411).